The primary structure comprises 422 residues: Enolase (422 aa).

Gln161 contributes to the (2R)-2-phosphoglycerate binding site. Residue Glu203 is the Proton donor of the active site. Mg(2+)-binding residues include Asp240, Glu283, and Asp310. Residues Lys335, Arg364, Ser365, and Lys386 each coordinate (2R)-2-phosphoglycerate. The active-site Proton acceptor is Lys335.

This sequence belongs to the enolase family. Mg(2+) is required as a cofactor.

It localises to the cytoplasm. Its subcellular location is the secreted. It is found in the cell surface. It catalyses the reaction (2R)-2-phosphoglycerate = phosphoenolpyruvate + H2O. The protein operates within carbohydrate degradation; glycolysis; pyruvate from D-glyceraldehyde 3-phosphate: step 4/5. Catalyzes the reversible conversion of 2-phosphoglycerate (2-PG) into phosphoenolpyruvate (PEP). It is essential for the degradation of carbohydrates via glycolysis. In Deinococcus geothermalis (strain DSM 11300 / CIP 105573 / AG-3a), this protein is Enolase.